A 709-amino-acid chain; its full sequence is Phosphoribosylformylglycinamidine synthase subunit PurL (709 aa).

His-36 is an active-site residue. The ATP site is built by Tyr-39 and Lys-80. Glu-82 provides a ligand contact to Mg(2+). Substrate contacts are provided by residues 83–86 (SHNH) and Arg-105. His-84 functions as the Proton acceptor in the catalytic mechanism. Asp-106 is a Mg(2+) binding site. Gln-226 serves as a coordination point for substrate. Residue Asp-252 participates in Mg(2+) binding. 294–296 (ETQ) contacts substrate. Residues Asp-470 and Gly-507 each coordinate ATP. Position 510 (Ser-510) interacts with substrate.

The protein belongs to the FGAMS family. As to quaternary structure, monomer. Part of the FGAM synthase complex composed of 1 PurL, 1 PurQ and 2 PurS subunits.

The protein resides in the cytoplasm. It carries out the reaction N(2)-formyl-N(1)-(5-phospho-beta-D-ribosyl)glycinamide + L-glutamine + ATP + H2O = 2-formamido-N(1)-(5-O-phospho-beta-D-ribosyl)acetamidine + L-glutamate + ADP + phosphate + H(+). It participates in purine metabolism; IMP biosynthesis via de novo pathway; 5-amino-1-(5-phospho-D-ribosyl)imidazole from N(2)-formyl-N(1)-(5-phospho-D-ribosyl)glycinamide: step 1/2. Its function is as follows. Part of the phosphoribosylformylglycinamidine synthase complex involved in the purines biosynthetic pathway. Catalyzes the ATP-dependent conversion of formylglycinamide ribonucleotide (FGAR) and glutamine to yield formylglycinamidine ribonucleotide (FGAM) and glutamate. The FGAM synthase complex is composed of three subunits. PurQ produces an ammonia molecule by converting glutamine to glutamate. PurL transfers the ammonia molecule to FGAR to form FGAM in an ATP-dependent manner. PurS interacts with PurQ and PurL and is thought to assist in the transfer of the ammonia molecule from PurQ to PurL. The protein is Phosphoribosylformylglycinamidine synthase subunit PurL of Saccharolobus islandicus (strain Y.N.15.51 / Yellowstone #2) (Sulfolobus islandicus).